The following is a 329-amino-acid chain: Glycosyltransferase family protein 64 C3 (329 aa).

A signal peptide spans 1 to 27 (MGVKSVRFSIWFLFVVTDLVFCRTLSG). Asn-99 is a glycosylation site (N-linked (GlcNAc...) asparagine). Substrate contacts are provided by residues 118-123 (SSLNAR), 139-141 (DDD), Arg-169, 226-230 (RNCED), and 271-284 (VGLS…RKRR). Asp-141 is a binding site for Mn(2+). Cysteines 228 and 287 form a disulfide. Residue Asp-230 is part of the active site. The substrate binding stretch occupies residues 268–284 (VRDVGLSSRRVEHRKRR).

The protein belongs to the glycosyltransferase 64 family. Mn(2+) is required as a cofactor.

It participates in protein modification; protein glycosylation. In terms of biological role, probable glycosyltransferase. The protein is Glycosyltransferase family protein 64 C3 of Arabidopsis thaliana (Mouse-ear cress).